We begin with the raw amino-acid sequence, 189 residues long: MAPSCPTRSRVWSSRTSPPPDLAESEAWVVMGRVSAPFGVKGWVKVQPFSEDPGTLMDFESWRVGRGEQQAQYAVEAVQDHGKSLVAKLVGIDDRDAAFALRGQEVSVAKSALPPPEENEFYWSDLIGLTVMNREGVELGKVDSLMESGAHDLLVVKGRREHLIPFVAAFVGKVDLAGGTVEVDWGEDY.

The span at 1–16 shows a compositional bias: polar residues; sequence MAPSCPTRSRVWSSRT. A disordered region spans residues 1–21; the sequence is MAPSCPTRSRVWSSRTSPPPD. Residues 118-189 enclose the PRC barrel domain; the sequence is ENEFYWSDLI…TVEVDWGEDY (72 aa).

Belongs to the RimM family. As to quaternary structure, binds ribosomal protein uS19.

The protein resides in the cytoplasm. In terms of biological role, an accessory protein needed during the final step in the assembly of 30S ribosomal subunit, possibly for assembly of the head region. Essential for efficient processing of 16S rRNA. May be needed both before and after RbfA during the maturation of 16S rRNA. It has affinity for free ribosomal 30S subunits but not for 70S ribosomes. The polypeptide is Ribosome maturation factor RimM (Thiobacillus denitrificans (strain ATCC 25259 / T1)).